The chain runs to 54 residues: Secreted virulence factor MC69 (54 aa).

The N-terminal stretch at 1–18 is a signal peptide; sequence MKFTLALLTTLCASLASA. Cys-38 and Cys-48 are disulfide-bonded.

It belongs to the MC69 virulence factor family.

It localises to the secreted. Its function is as follows. Secreted protein required for appressorial penetration of intact host epidermal cells and for pathogenicity. This is Secreted virulence factor MC69 from Colletotrichum orbiculare (strain 104-T / ATCC 96160 / CBS 514.97 / LARS 414 / MAFF 240422) (Cucumber anthracnose fungus).